The following is a 140-amino-acid chain: Nucleoside diphosphate kinase (140 aa).

ATP contacts are provided by lysine 11, phenylalanine 59, arginine 87, threonine 93, arginine 104, and asparagine 114. The Pros-phosphohistidine intermediate role is filled by histidine 117.

This sequence belongs to the NDK family. Homotetramer. Requires Mg(2+) as cofactor.

It localises to the cytoplasm. The enzyme catalyses a 2'-deoxyribonucleoside 5'-diphosphate + ATP = a 2'-deoxyribonucleoside 5'-triphosphate + ADP. The catalysed reaction is a ribonucleoside 5'-diphosphate + ATP = a ribonucleoside 5'-triphosphate + ADP. Its function is as follows. Major role in the synthesis of nucleoside triphosphates other than ATP. The ATP gamma phosphate is transferred to the NDP beta phosphate via a ping-pong mechanism, using a phosphorylated active-site intermediate. The protein is Nucleoside diphosphate kinase of Rhizobium meliloti (strain 1021) (Ensifer meliloti).